The chain runs to 344 residues: Phenylalanine--tRNA ligase alpha subunit (344 aa).

Glutamate 256 serves as a coordination point for Mg(2+).

Belongs to the class-II aminoacyl-tRNA synthetase family. Phe-tRNA synthetase alpha subunit type 1 subfamily. As to quaternary structure, tetramer of two alpha and two beta subunits. Requires Mg(2+) as cofactor.

The protein localises to the cytoplasm. The enzyme catalyses tRNA(Phe) + L-phenylalanine + ATP = L-phenylalanyl-tRNA(Phe) + AMP + diphosphate + H(+). This is Phenylalanine--tRNA ligase alpha subunit from Bacillus mycoides (strain KBAB4) (Bacillus weihenstephanensis).